Here is a 502-residue protein sequence, read N- to C-terminus: Ribose import ATP-binding protein RbsA (502 aa).

ABC transporter domains follow at residues Val3–Glu239 and Ala249–Ala493. An ATP-binding site is contributed by Gly35–Ser42.

The protein belongs to the ABC transporter superfamily. Ribose importer (TC 3.A.1.2.1) family. The complex is composed of an ATP-binding protein (RbsA), two transmembrane proteins (RbsC) and a solute-binding protein (RbsB).

The protein localises to the cell inner membrane. The catalysed reaction is D-ribose(out) + ATP + H2O = D-ribose(in) + ADP + phosphate + H(+). Part of the ABC transporter complex RbsABC involved in ribose import. Responsible for energy coupling to the transport system. In Chromobacterium violaceum (strain ATCC 12472 / DSM 30191 / JCM 1249 / CCUG 213 / NBRC 12614 / NCIMB 9131 / NCTC 9757 / MK), this protein is Ribose import ATP-binding protein RbsA.